The primary structure comprises 312 residues: Eukaryotic translation initiation factor 2 subunit 2 (312 aa).

Disordered regions lie at residues alanine 26–methionine 104 and alanine 125–tryptophan 146. Phosphoserine is present on serine 44. 2 stretches are compositionally biased toward acidic residues: residues alanine 90 to leucine 102 and alanine 125 to asparagine 142. Serine 133 is subject to Phosphoserine. Phosphothreonine is present on threonine 145. The C4-type zinc-finger motif lies at cysteine 260–cysteine 284.

Belongs to the eIF-2-beta/eIF-5 family. As to quaternary structure, eukaryotic translation initiation factor 2 eIF2 is a heterotrimeric complex composed of an alpha, a beta and a gamma subunit.

The protein resides in the cytoplasm. It localises to the cytosol. In terms of biological role, component of the eIF2 complex that functions in the early steps of protein synthesis by forming a ternary complex with GTP and initiator tRNA. This complex binds to a 40S ribosomal subunit, followed by mRNA binding to form a 43S pre-initiation complex (43S PIC). Junction of the 60S ribosomal subunit to form the 80S initiation complex is preceded by hydrolysis of the GTP bound to eIF2 and release of an eIF2-GDP binary complex. In order for eIF2 to recycle and catalyze another round of initiation, the GDP bound to eIF2 must exchange with GTP by way of a reaction catalyzed by eIF2B. This is Eukaryotic translation initiation factor 2 subunit 2 from Drosophila melanogaster (Fruit fly).